A 430-amino-acid chain; its full sequence is Dihydrofolate synthase/folylpolyglutamate synthase (430 aa).

Residue 51 to 54 (GKGS) participates in ATP binding. Residue S75 coordinates Mg(2+). 114-117 (TEYG) is a binding site for 7,8-dihydropteroate. Residue E145 participates in Mg(2+) binding. Position 152–154 (152–154 (FDS)) interacts with 7,8-dihydropteroate. A Mg(2+)-binding site is contributed by H172. ATP-binding residues include Q263, R302, and D315.

It belongs to the folylpolyglutamate synthase family. In terms of assembly, monomer. It depends on Mg(2+) as a cofactor.

The catalysed reaction is 7,8-dihydropteroate + L-glutamate + ATP = 7,8-dihydrofolate + ADP + phosphate + H(+). It catalyses the reaction (6S)-5,6,7,8-tetrahydrofolyl-(gamma-L-Glu)(n) + L-glutamate + ATP = (6S)-5,6,7,8-tetrahydrofolyl-(gamma-L-Glu)(n+1) + ADP + phosphate + H(+). It participates in cofactor biosynthesis; tetrahydrofolate biosynthesis; 7,8-dihydrofolate from 2-amino-4-hydroxy-6-hydroxymethyl-7,8-dihydropteridine diphosphate and 4-aminobenzoate: step 2/2. The protein operates within cofactor biosynthesis; tetrahydrofolylpolyglutamate biosynthesis. Functionally, functions in two distinct reactions of the de novo folate biosynthetic pathway. Catalyzes the addition of a glutamate residue to dihydropteroate (7,8-dihydropteroate or H2Pte) to form dihydrofolate (7,8-dihydrofolate monoglutamate or H2Pte-Glu). Also catalyzes successive additions of L-glutamate to tetrahydrofolate, leading to folylpolyglutamate derivatives. The chain is Dihydrofolate synthase/folylpolyglutamate synthase (folC) from Bacillus subtilis (strain 168).